Here is a 206-residue protein sequence, read N- to C-terminus: ATP phosphoribosyltransferase (206 aa).

This sequence belongs to the ATP phosphoribosyltransferase family. Short subfamily. In terms of assembly, heteromultimer composed of HisG and HisZ subunits.

It is found in the cytoplasm. The enzyme catalyses 1-(5-phospho-beta-D-ribosyl)-ATP + diphosphate = 5-phospho-alpha-D-ribose 1-diphosphate + ATP. It functions in the pathway amino-acid biosynthesis; L-histidine biosynthesis; L-histidine from 5-phospho-alpha-D-ribose 1-diphosphate: step 1/9. In terms of biological role, catalyzes the condensation of ATP and 5-phosphoribose 1-diphosphate to form N'-(5'-phosphoribosyl)-ATP (PR-ATP). Has a crucial role in the pathway because the rate of histidine biosynthesis seems to be controlled primarily by regulation of HisG enzymatic activity. The protein is ATP phosphoribosyltransferase of Wolinella succinogenes (strain ATCC 29543 / DSM 1740 / CCUG 13145 / JCM 31913 / LMG 7466 / NCTC 11488 / FDC 602W) (Vibrio succinogenes).